The primary structure comprises 229 residues: Potassium/proton antiporter CemA (229 aa).

The next 3 membrane-spanning stretches (helical) occupy residues 7-27, 114-134, and 189-209; these read FTPLLYLASLVFLPWWISLSF, IICFVILSGYSIWGNEELVIL, and ILSGLVSTFPVILDTLFKFWI.

Belongs to the CemA family.

It localises to the plastid. It is found in the chloroplast inner membrane. It carries out the reaction K(+)(in) + H(+)(out) = K(+)(out) + H(+)(in). Functionally, contributes to K(+)/H(+) antiport activity by supporting proton efflux to control proton extrusion and homeostasis in chloroplasts in a light-dependent manner to modulate photosynthesis. Prevents excessive induction of non-photochemical quenching (NPQ) under continuous-light conditions. Indirectly promotes efficient inorganic carbon uptake into chloroplasts. In Panax ginseng (Korean ginseng), this protein is Potassium/proton antiporter CemA.